A 507-amino-acid chain; its full sequence is Acetylcholine receptor subunit beta-type lev-1 (507 aa).

The signal sequence occupies residues 1-31; it reads MMLGGGGGCGAGGTWLGFLVFLAVSLRNHST. N-linked (GlcNAc...) asparagine glycosylation is found at Asn-28, Asn-58, and Asn-109. Over 32–138 the chain is Extracellular; it reads CEDIDAEDRL…NNADGNYEVS (107 aa). A helical membrane pass occupies residues 139–159; it reads FMCNVLILSTGTVLWVPPAIY. Cys-163 and Cys-177 are disulfide-bonded. 3 consecutive transmembrane segments (helical) span residues 243 to 263, 271 to 291, and 305 to 325; these read VVLI…FYLP, GLTM…SKIL, and LLLT…ICNI. Positions 373 to 392 are disordered; it reads GPSVEENPMRSGEHHPLCRH. Over residues 379–392 the composition is skewed to basic and acidic residues; that stretch reads NPMRSGEHHPLCRH. A helical transmembrane segment spans residues 454–474; the sequence is FLLYGFFGATVGGTIGIIFTA.

It belongs to the ligand-gated ion channel (TC 1.A.9) family. Acetylcholine receptor (TC 1.A.9.1) subfamily. In terms of assembly, interacts with unc-29. Component of nicotinic acetylcholine receptor composed of 2 non-alpha subunits lev-1 and unc-29, and 3 alpha subunits unc-38, unc-63 and lev-8.

Its subcellular location is the postsynaptic cell membrane. The protein resides in the cell membrane. Non-alpha subunit of nicotinic acetylcholine receptor (nAChR). Involved in nAChR sensitivity to nicotine. The polypeptide is Acetylcholine receptor subunit beta-type lev-1 (lev-1) (Caenorhabditis elegans).